Reading from the N-terminus, the 365-residue chain is Alanine racemase (365 aa).

Lysine 35 acts as the Proton acceptor; specific for D-alanine in catalysis. An N6-(pyridoxal phosphate)lysine modification is found at lysine 35. Residue arginine 130 coordinates substrate. Tyrosine 256 (proton acceptor; specific for L-alanine) is an active-site residue. Methionine 304 lines the substrate pocket.

This sequence belongs to the alanine racemase family. The cofactor is pyridoxal 5'-phosphate.

The catalysed reaction is L-alanine = D-alanine. It participates in amino-acid biosynthesis; D-alanine biosynthesis; D-alanine from L-alanine: step 1/1. In terms of biological role, catalyzes the interconversion of L-alanine and D-alanine. May also act on other amino acids. The sequence is that of Alanine racemase (alr) from Acidovorax ebreus (strain TPSY) (Diaphorobacter sp. (strain TPSY)).